The chain runs to 74 residues: Protein kish-B (74 aa).

A signal peptide spans 1–22 (MTNVYSLDGLLVFALLFVCTCA). Residues 23 to 52 (YFRKVPRLRSWLLSEKKGVWGVFYKAAVIG) are Extracellular-facing. Residues 53-73 (SRLHLAVSISCIAMAFYVLFI) traverse the membrane as a helical segment. A topological domain (cytoplasmic) is located at residue Lys74.

It belongs to the KISH family.

The protein localises to the golgi apparatus membrane. Involved in the early part of the secretory pathway. The sequence is that of Protein kish-B (tmem167b) from Xenopus laevis (African clawed frog).